The following is a 302-amino-acid chain: Olfactory receptor 51H1 (302 aa).

The Extracellular segment spans residues 1–27; the sequence is MTNLNASQANHRNFILTGIPGTPDKNP. N-linked (GlcNAc...) asparagine glycosylation occurs at Asn5. A helical membrane pass occupies residues 28–48; sequence WLAFPLGFLYTLTLLGNGTIL. At 49-56 the chain is on the cytoplasmic side; that stretch reads AVIKVEPS. Residues 57–77 form a helical membrane-spanning segment; the sequence is LHEPTYYFLSILALTDVSLSM. The Extracellular portion of the chain corresponds to 78–101; sequence STLPSMLSIYWFNAPQIVFDACIM. Cys99 and Cys191 are disulfide-bonded. The helical transmembrane segment at 102-122 threads the bilayer; the sequence is QMFFIHVFGIVESGVLVSMAF. Topologically, residues 123–141 are cytoplasmic; it reads DRFVAIRNPLHYVSILTHD. The chain crosses the membrane as a helical span at residues 142–162; the sequence is VIRKTGIAVLTRAVCVVFPVP. The Extracellular portion of the chain corresponds to 163 to 198; it reads FLIKCLPFCHSNVLSHSYCLHQNMMRLACASTRINS. A helical transmembrane segment spans residues 199 to 219; the sequence is LYGLIVVIFTLGLDVLLTLLS. Topologically, residues 220–239 are cytoplasmic; it reads YVLTLKTVLGIVSRGERLKT. A helical membrane pass occupies residues 240–260; that stretch reads LSTCLSHMSTVLLFYVPFMGA. The Extracellular segment spans residues 261–276; that stretch reads ASMIHRFWEHLSPVVH. Residues 277–297 traverse the membrane as a helical segment; it reads MVMADIYLLLPPVLNPIVYSV. Residues 298–302 are Cytoplasmic-facing; the sequence is KTKQI.

It belongs to the G-protein coupled receptor 1 family.

The protein localises to the cell membrane. Odorant receptor. The protein is Olfactory receptor 51H1 (OR51H1) of Homo sapiens (Human).